The sequence spans 151 residues: Acidic phospholipase A2 2 (151 aa).

Positions 1 to 27 (MYPAHLLVLLAVCVSLLGAASIPARPL) are cleaved as a signal peptide. Cystine bridges form between Cys-38/Cys-104, Cys-54/Cys-151, Cys-56/Cys-72, Cys-71/Cys-132, Cys-78/Cys-125, Cys-88/Cys-118, and Cys-111/Cys-123. Tyr-55, Gly-57, and Gly-59 together coordinate Ca(2+). Residue His-75 is part of the active site. Asp-76 is a Ca(2+) binding site. The active site involves Asp-126.

It belongs to the phospholipase A2 family. Group I subfamily. D49 sub-subfamily. It depends on Ca(2+) as a cofactor. As to expression, expressed by the venom gland.

It is found in the secreted. The enzyme catalyses a 1,2-diacyl-sn-glycero-3-phosphocholine + H2O = a 1-acyl-sn-glycero-3-phosphocholine + a fatty acid + H(+). PLA2 catalyzes the calcium-dependent hydrolysis of the 2-acyl groups in 3-sn-phosphoglycerides. The polypeptide is Acidic phospholipase A2 2 (Tropidechis carinatus (Australian rough-scaled snake)).